Consider the following 907-residue polypeptide: Leucine-rich repeat-containing G-protein coupled receptor 5 (907 aa).

Residues 1 to 21 form the signal peptide; that stretch reads MDTSRVRMLLSLLALLQLVAA. The Extracellular segment spans residues 22–561; sequence GSPPRPDTMP…EHLFGSWLIR (540 aa). An LRRNT domain is found at 33–64; that stretch reads GCPSYCHCELDGRMLLRVDCSDLGLSELPSNL. Cystine bridges form between C34-C40 and C38-C52. LRR repeat units lie at residues 44 to 64, 65 to 88, 89 to 112, 114 to 136, 137 to 160, 162 to 184, 186 to 208, 209 to 232, 233 to 256, 257 to 279, 281 to 303, 304 to 327, 328 to 350, 351 to 375, 377 to 396, 397 to 420, and 422 to 444; these read GRMLLRVDCSDLGLSELPSNL, SVFTSYLDLSMNNISQLPASLLHR, LRFLEELRLAGNALTHIPKGAFAG, HSLKVLMLQNNQLRQVPEEALQN, LRSLQSLRLDANHISYVPPSCFSG, HSLRHLWLDDNALTDVPVQAFRS, SALQAMTLALNKIHHIADHAFGN, LSSLVVLHLHNNRIHSLGKKCFDG, LHSLETLDLNYNNLDEFPTAIKTL, SNLKELGFHSNNIRSIPERAFVG, PSLITIHFYDNPIQFVGISAFQH, LPELRTLTLNGASQITEFPDLTGT, ATLESLTLTGAKISSLPQTVCDQ, LPNLQVLDLSYNLLEDLPSLSGCQK, QKIDLRHNEIYEIKGGTFQQ, LFNLRSLNLARNKIAIIHPNAFST, and PSLIKLDLSSNLLSSFPVTGLHG. 2 N-linked (GlcNAc...) asparagine glycosylation sites follow: N63 and N77. The N-linked (GlcNAc...) asparagine glycan is linked to N208. A disulfide bridge connects residues C348 and C373. The cysteines at positions 479 and 541 are disulfide-linked. Residues 562 to 582 traverse the membrane as a helical segment; sequence IGVWTTAVLALSCNALVAFTV. Residues 564-585 form an LRR 18 repeat; it reads VWTTAVLALSCNALVAFTVFRT. At 583–595 the chain is on the cytoplasmic side; the sequence is FRTPLYISSIKLL. Residues 596–616 form a helical membrane-spanning segment; sequence IGVIAVVDILMGVSSAILAVV. At 617 to 638 the chain is on the extracellular side; that stretch reads DTFTFGSFAQHGAWWEGGIGCQ. A disulfide bridge links C637 with C712. A helical transmembrane segment spans residues 639-659; it reads IVGFLSIFASESSVFLLTLAA. At 660–682 the chain is on the cytoplasmic side; that stretch reads LERGFSVKCSSKFEMKAPLSSLK. A helical membrane pass occupies residues 683 to 703; it reads AIILLCVLLALTIATVPLLGG. At 704 to 723 the chain is on the extracellular side; it reads SEYNASPLCLPLPFGEPSTT. A helical membrane pass occupies residues 724 to 744; it reads GYMVALVLLNSLCFLIMTIAY. At 745-775 the chain is on the cytoplasmic side; the sequence is TRLYCSLEKGELENLWDCSMVKHTALLLFTN. A helical membrane pass occupies residues 776 to 796; it reads CILYCPVAFLSFSSLLNLTFI. Residues 797–802 are Extracellular-facing; sequence SPEVIK. A helical transmembrane segment spans residues 803-823; it reads FILLVIVPLPACLNPLLYIVF. The Cytoplasmic segment spans residues 824–907; it reads NPHFKEDMGS…LSSVAFVPCL (84 aa).

This sequence belongs to the G-protein coupled receptor 1 family. As to quaternary structure, identified in a complex composed of RNF43, LGR5 and RSPO1. Also interacts with other R-spondin ligands, including RSPO2, RSPO3 and RSPO4.

It is found in the cell membrane. The protein resides in the golgi apparatus. Its subcellular location is the trans-Golgi network membrane. Its function is as follows. Receptor for R-spondins that potentiates the canonical Wnt signaling pathway and acts as a stem cell marker of the intestinal epithelium and the hair follicle. Upon binding to R-spondins (RSPO1, RSPO2, RSPO3 or RSPO4), associates with phosphorylated LRP6 and frizzled receptors that are activated by extracellular Wnt receptors, triggering the canonical Wnt signaling pathway to increase expression of target genes. In contrast to classical G-protein coupled receptors, does not activate heterotrimeric G-proteins to transduce the signal. Involved in the development and/or maintenance of the adult intestinal stem cells during postembryonic development. The sequence is that of Leucine-rich repeat-containing G-protein coupled receptor 5 (Lgr5) from Rattus norvegicus (Rat).